We begin with the raw amino-acid sequence, 551 residues long: HTH-type transcriptional regulator SgrR (551 aa).

One can recognise an HTH marR-type domain in the interval 1–116 (MPSARLQQQF…LVSHLGRSFR (116 aa)). The segment at residues 26–49 (LNELAALLSCSRRHMRTLLNTMQD) is a DNA-binding region (H-T-H motif). Positions 163 to 492 (ELEADIAHHW…IDWQADAARW (330 aa)) are solute-binding.

In terms of biological role, activates the small RNA gene sgrS under glucose-phosphate stress conditions as well as yfdZ. Represses its own transcription under both stress and non-stress conditions. Might act as a sensor of the intracellular accumulation of phosphoglucose by binding these molecules in its C-terminal solute-binding domain. This chain is HTH-type transcriptional regulator SgrR, found in Escherichia coli O1:K1 / APEC.